A 228-amino-acid chain; its full sequence is 5'-methylthioadenosine/S-adenosylhomocysteine nucleosidase (228 aa).

The active-site Proton acceptor is the E11. Substrate-binding positions include G77, I151, and 172 to 173; that span reads ME. The active-site Proton donor is D196.

This sequence belongs to the PNP/UDP phosphorylase family. MtnN subfamily.

The enzyme catalyses S-adenosyl-L-homocysteine + H2O = S-(5-deoxy-D-ribos-5-yl)-L-homocysteine + adenine. The catalysed reaction is S-methyl-5'-thioadenosine + H2O = 5-(methylsulfanyl)-D-ribose + adenine. It catalyses the reaction 5'-deoxyadenosine + H2O = 5-deoxy-D-ribose + adenine. It participates in amino-acid biosynthesis; L-methionine biosynthesis via salvage pathway; S-methyl-5-thio-alpha-D-ribose 1-phosphate from S-methyl-5'-thioadenosine (hydrolase route): step 1/2. Functionally, catalyzes the irreversible cleavage of the glycosidic bond in both 5'-methylthioadenosine (MTA) and S-adenosylhomocysteine (SAH/AdoHcy) to adenine and the corresponding thioribose, 5'-methylthioribose and S-ribosylhomocysteine, respectively. Also cleaves 5'-deoxyadenosine, a toxic by-product of radical S-adenosylmethionine (SAM) enzymes, into 5-deoxyribose and adenine. In Staphylococcus haemolyticus (strain JCSC1435), this protein is 5'-methylthioadenosine/S-adenosylhomocysteine nucleosidase.